The chain runs to 1070 residues: DNA-directed RNA polymerase subunit beta (1070 aa).

This sequence belongs to the RNA polymerase beta chain family. In terms of assembly, in plastids the minimal PEP RNA polymerase catalytic core is composed of four subunits: alpha, beta, beta', and beta''. When a (nuclear-encoded) sigma factor is associated with the core the holoenzyme is formed, which can initiate transcription.

The protein localises to the plastid. Its subcellular location is the chloroplast. It catalyses the reaction RNA(n) + a ribonucleoside 5'-triphosphate = RNA(n+1) + diphosphate. In terms of biological role, DNA-dependent RNA polymerase catalyzes the transcription of DNA into RNA using the four ribonucleoside triphosphates as substrates. In Vitis vinifera (Grape), this protein is DNA-directed RNA polymerase subunit beta.